The primary structure comprises 144 residues: Large ribosomal subunit protein uL15 (144 aa).

A disordered region spans residues 1–44 (MNLNELQPAAGSRKLRNRVGRGTSSGNGKTSGRGQKGQKARGKV). Residues 23–35 (TSSGNGKTSGRGQ) show a composition bias toward gly residues.

Belongs to the universal ribosomal protein uL15 family. In terms of assembly, part of the 50S ribosomal subunit.

In terms of biological role, binds to the 23S rRNA. This chain is Large ribosomal subunit protein uL15, found in Leuconostoc citreum (strain KM20).